A 253-amino-acid polypeptide reads, in one-letter code: UDP-Glc:alpha-D-GlcNAc-diphosphoundecaprenol beta-1,3-glucosyltransferase WfgD (253 aa).

Belongs to the glycosyltransferase 2 family. Requires Mn(2+) as cofactor. The cofactor is Mg(2+).

It is found in the cell inner membrane. The enzyme catalyses N-acetyl-alpha-D-glucosaminyl-di-trans,octa-cis-undecaprenyl diphosphate + UDP-alpha-D-glucose = beta-D-Glc-(1-&gt;3)-alpha-D-GlcNAc-di-trans,octa-cis-undecaprenyl diphosphate + UDP + H(+). The protein operates within bacterial outer membrane biogenesis; lipopolysaccharide biosynthesis. Its function is as follows. Catalyzes the addition of Glc, the second sugar moiety of the O152-antigen repeating unit, to GlcNAc-pyrophosphate-undecaprenol. This Escherichia coli protein is UDP-Glc:alpha-D-GlcNAc-diphosphoundecaprenol beta-1,3-glucosyltransferase WfgD (wfgD).